Here is a 408-residue protein sequence, read N- to C-terminus: Multidrug resistance protein MdtG (408 aa).

The next 11 membrane-spanning stretches (helical) occupy residues 16-36 (LIVA…VMPF), 58-78 (IVFS…GGLA), 92-112 (LGMG…QFLI), 115-135 (ALLG…ATQV), 146-166 (TLST…GLLA), 173-193 (PVFF…LFCI), 224-244 (LFVT…ILTL), 256-276 (VAFI…LSAP), 290-310 (ILIT…YVQT), 319-339 (FLLG…LVYN), and 378-398 (AVFL…WNSL).

It belongs to the major facilitator superfamily. DHA1 family. MdtG (TC 2.A.1.2.20) subfamily.

It localises to the cell inner membrane. Its function is as follows. Confers resistance to fosfomycin and deoxycholate. The sequence is that of Multidrug resistance protein MdtG from Escherichia coli O139:H28 (strain E24377A / ETEC).